Consider the following 147-residue polypeptide: Phosphoribosyl-AMP cyclohydrolase (147 aa).

Asp-91 lines the Mg(2+) pocket. A Zn(2+)-binding site is contributed by Cys-92. Residues Asp-93 and Asp-95 each coordinate Mg(2+). Zn(2+) contacts are provided by Cys-109 and Cys-116.

This sequence belongs to the PRA-CH family. In terms of assembly, homodimer. Requires Mg(2+) as cofactor. It depends on Zn(2+) as a cofactor.

Its subcellular location is the cytoplasm. The catalysed reaction is 1-(5-phospho-beta-D-ribosyl)-5'-AMP + H2O = 1-(5-phospho-beta-D-ribosyl)-5-[(5-phospho-beta-D-ribosylamino)methylideneamino]imidazole-4-carboxamide. Its pathway is amino-acid biosynthesis; L-histidine biosynthesis; L-histidine from 5-phospho-alpha-D-ribose 1-diphosphate: step 3/9. Catalyzes the hydrolysis of the adenine ring of phosphoribosyl-AMP. This is Phosphoribosyl-AMP cyclohydrolase from Rhodopseudomonas palustris (strain BisA53).